Consider the following 437-residue polypeptide: ATP-dependent protease ATPase subunit HslU (437 aa).

ATP contacts are provided by residues V18, 60–65 (GCGKTE), D250, E315, and R387.

The protein belongs to the ClpX chaperone family. HslU subfamily. In terms of assembly, a double ring-shaped homohexamer of HslV is capped on each side by a ring-shaped HslU homohexamer. The assembly of the HslU/HslV complex is dependent on binding of ATP.

Its subcellular location is the cytoplasm. ATPase subunit of a proteasome-like degradation complex; this subunit has chaperone activity. The binding of ATP and its subsequent hydrolysis by HslU are essential for unfolding of protein substrates subsequently hydrolyzed by HslV. HslU recognizes the N-terminal part of its protein substrates and unfolds these before they are guided to HslV for hydrolysis. The chain is ATP-dependent protease ATPase subunit HslU from Methylobacterium sp. (strain 4-46).